Consider the following 263-residue polypeptide: Phosphate import ATP-binding protein PstB (263 aa).

Positions 16 to 258 constitute an ABC transporter domain; the sequence is VTARNVTVSY…PRDTRTQDYI (243 aa). 48-55 contributes to the ATP binding site; that stretch reads GPSGCGKS.

The protein belongs to the ABC transporter superfamily. Phosphate importer (TC 3.A.1.7) family. In terms of assembly, the complex is composed of two ATP-binding proteins (PstB), two transmembrane proteins (PstC and PstA) and a solute-binding protein (PstS).

It is found in the cell inner membrane. It catalyses the reaction phosphate(out) + ATP + H2O = ADP + 2 phosphate(in) + H(+). Functionally, part of the ABC transporter complex PstSACB involved in phosphate import. Responsible for energy coupling to the transport system. This chain is Phosphate import ATP-binding protein PstB, found in Maricaulis maris (strain MCS10) (Caulobacter maris).